A 316-amino-acid polypeptide reads, in one-letter code: uncharacterized protein (316 aa).

The protein belongs to the chlamydial CPn_0441/CT_007/TC_0275 family.

This is an uncharacterized protein from Chlamydia trachomatis serovar D (strain ATCC VR-885 / DSM 19411 / UW-3/Cx).